A 37-amino-acid chain; its full sequence is Large ribosomal subunit protein bL36 (37 aa).

It belongs to the bacterial ribosomal protein bL36 family.

In Aromatoleum aromaticum (strain DSM 19018 / LMG 30748 / EbN1) (Azoarcus sp. (strain EbN1)), this protein is Large ribosomal subunit protein bL36.